A 199-amino-acid chain; its full sequence is MTRCDDRPSASQISITHVTQGSCVASSSPNEVYATILGSCICTCMCDPVAGVGGMNHFLLPSADVEDAQHLRYGSHAMELLINALLKLGAARQRIEAKIFGGAMMTPQLGAIGQANAAFARRYLRDEGIRCTAHSLGGNRARRIRFWPKTGRVQQMFLGSEDVVPNEQPQFRLQGGAGDVTFFDRHNNAEMPDPIKEPR.

This sequence belongs to the CheD family.

It carries out the reaction L-glutaminyl-[protein] + H2O = L-glutamyl-[protein] + NH4(+). Functionally, probably deamidates glutamine residues to glutamate on methyl-accepting chemotaxis receptors (MCPs), playing an important role in chemotaxis. The protein is Probable chemoreceptor glutamine deamidase CheD of Cereibacter sphaeroides (Rhodobacter sphaeroides).